Here is a 216-residue protein sequence, read N- to C-terminus: Uracil phosphoribosyltransferase (216 aa).

5-phospho-alpha-D-ribose 1-diphosphate contacts are provided by residues R85, R110, and 135-143 (DPMVATGYS). Uracil is bound by residues I200 and 205-207 (GDA). D206 provides a ligand contact to 5-phospho-alpha-D-ribose 1-diphosphate.

This sequence belongs to the UPRTase family. Requires Mg(2+) as cofactor.

It carries out the reaction UMP + diphosphate = 5-phospho-alpha-D-ribose 1-diphosphate + uracil. It functions in the pathway pyrimidine metabolism; UMP biosynthesis via salvage pathway; UMP from uracil: step 1/1. Its activity is regulated as follows. Allosterically activated by GTP. Its function is as follows. Catalyzes the conversion of uracil and 5-phospho-alpha-D-ribose 1-diphosphate (PRPP) to UMP and diphosphate. This Paraburkholderia xenovorans (strain LB400) protein is Uracil phosphoribosyltransferase.